Consider the following 268-residue polypeptide: F-actin-capping protein subunit beta (268 aa).

Belongs to the F-actin-capping protein beta subunit family. In terms of assembly, component of the F-actin capping complex, composed of a heterodimer of an alpha and a beta subunit.

The protein localises to the cytoplasm. The protein resides in the cytoskeleton. It is found in the actin patch. It localises to the nucleus. Its function is as follows. F-actin-capping proteins bind in a Ca(2+)-independent manner to the fast growing ends of actin filaments (barbed end) thereby blocking the exchange of subunits at these ends. Unlike other capping proteins (such as gelsolin and severin), these proteins do not sever actin filaments. Competes with formin cdc12 for attachment to the actin filaments barbed ends. Slowly replaces cdc12 on the barbed ends in preparation for filament disassembly during contractile ring constriction. This chain is F-actin-capping protein subunit beta (acp2), found in Schizosaccharomyces pombe (strain 972 / ATCC 24843) (Fission yeast).